A 364-amino-acid polypeptide reads, in one-letter code: Fructose-bisphosphate aldolase A (364 aa).

Threonine 9 carries the phosphothreonine modification. 2 positions are modified to phosphoserine: serine 36 and serine 39. At lysine 42 the chain carries N6-acetyllysine; alternate. Residue lysine 42 forms a Glycyl lysine isopeptide (Lys-Gly) (interchain with G-Cter in SUMO1); alternate linkage. Residue lysine 42 forms a Glycyl lysine isopeptide (Lys-Gly) (interchain with G-Cter in SUMO2); alternate linkage. Arginine 43 provides a ligand contact to beta-D-fructose 1,6-bisphosphate. A Phosphoserine modification is found at serine 46. Lysine 99 is modified (N6-(2-hydroxyisobutyryl)lysine). N6-acetyllysine is present on lysine 108. Position 111 is an N6-acetyllysine; alternate (lysine 111). N6-malonyllysine; alternate is present on lysine 111. Serine 132 carries the phosphoserine modification. Lysine 147 carries the N6-(2-hydroxyisobutyryl)lysine modification. The active-site Proton acceptor is the glutamate 188. Lysine 230 functions as the Schiff-base intermediate with dihydroxyacetone-P in the catalytic mechanism. Serine 272 is subject to Phosphoserine. Beta-D-fructose 1,6-bisphosphate contacts are provided by residues 272–274 (SGG), serine 301, and arginine 304. Lysine 312 is subject to N6-malonyllysine. Residue lysine 330 is modified to N6-acetyllysine. Asparagine 361 is subject to Deamidated asparagine; in form beta.

The protein belongs to the class I fructose-bisphosphate aldolase family. Homotetramer. Interacts with SNX9 and WAS. Interacts with FBP2; the interaction blocks FBP2 inhibition by physiological concentrations of AMP and reduces inhibition by Ca(2+). Asn-361 in form alpha is deaminated to Asp in form beta.

Its subcellular location is the cytoplasm. It is found in the myofibril. It localises to the sarcomere. The protein localises to the i band. The protein resides in the m line. The enzyme catalyses beta-D-fructose 1,6-bisphosphate = D-glyceraldehyde 3-phosphate + dihydroxyacetone phosphate. It participates in carbohydrate degradation; glycolysis; D-glyceraldehyde 3-phosphate and glycerone phosphate from D-glucose: step 4/4. Functionally, plays a key role in glycolysis and gluconeogenesis. In addition, may also function as scaffolding protein. This Oryctolagus cuniculus (Rabbit) protein is Fructose-bisphosphate aldolase A (ALDOA).